The sequence spans 404 residues: LL-diaminopimelate aminotransferase (404 aa).

2 residues coordinate substrate: Y15 and G42. Pyridoxal 5'-phosphate-binding positions include Y72, 108 to 109 (AK), Y132, N188, Y219, and 247 to 249 (SFS). Residues K109, Y132, and N188 each contribute to the substrate site. K250 carries the post-translational modification N6-(pyridoxal phosphate)lysine. 2 residues coordinate pyridoxal 5'-phosphate: R258 and N288. 2 residues coordinate substrate: N288 and R384.

It belongs to the class-I pyridoxal-phosphate-dependent aminotransferase family. LL-diaminopimelate aminotransferase subfamily. In terms of assembly, homodimer. Pyridoxal 5'-phosphate serves as cofactor.

The catalysed reaction is (2S,6S)-2,6-diaminopimelate + 2-oxoglutarate = (S)-2,3,4,5-tetrahydrodipicolinate + L-glutamate + H2O + H(+). It functions in the pathway amino-acid biosynthesis; L-lysine biosynthesis via DAP pathway; LL-2,6-diaminopimelate from (S)-tetrahydrodipicolinate (aminotransferase route): step 1/1. Its function is as follows. Involved in the synthesis of meso-diaminopimelate (m-DAP or DL-DAP), required for both lysine and peptidoglycan biosynthesis. Catalyzes the direct conversion of tetrahydrodipicolinate to LL-diaminopimelate. The protein is LL-diaminopimelate aminotransferase of Lachnospira eligens (strain ATCC 27750 / DSM 3376 / VPI C15-48 / C15-B4) (Eubacterium eligens).